Reading from the N-terminus, the 108-residue chain is Nucleoid-associated protein BPP1222 (108 aa).

Positions 86–108 (TSQEKMASVTAGMPLPPGMKLPF) are disordered. Pro residues predominate over residues 99–108 (PLPPGMKLPF).

The protein belongs to the YbaB/EbfC family. In terms of assembly, homodimer.

It localises to the cytoplasm. It is found in the nucleoid. Binds to DNA and alters its conformation. May be involved in regulation of gene expression, nucleoid organization and DNA protection. This chain is Nucleoid-associated protein BPP1222, found in Bordetella parapertussis (strain 12822 / ATCC BAA-587 / NCTC 13253).